We begin with the raw amino-acid sequence, 427 residues long: Adenylosuccinate synthetase (427 aa).

Residues 12 to 18 (GDEGKGK) and 40 to 42 (GHT) contribute to the GTP site. Catalysis depends on Asp-13, which acts as the Proton acceptor. Residues Asp-13 and Gly-40 each coordinate Mg(2+). IMP contacts are provided by residues 13–16 (DEGK), 38–41 (NAGH), Thr-128, Arg-142, Gln-223, Thr-238, and Arg-302. His-41 acts as the Proton donor in catalysis. 298–304 (TTTGRPR) lines the substrate pocket. GTP is bound by residues Arg-304, 330 to 332 (KLD), and 412 to 414 (AVG).

Belongs to the adenylosuccinate synthetase family. Homodimer. Mg(2+) is required as a cofactor.

It is found in the cytoplasm. The enzyme catalyses IMP + L-aspartate + GTP = N(6)-(1,2-dicarboxyethyl)-AMP + GDP + phosphate + 2 H(+). Its pathway is purine metabolism; AMP biosynthesis via de novo pathway; AMP from IMP: step 1/2. Plays an important role in the de novo pathway of purine nucleotide biosynthesis. Catalyzes the first committed step in the biosynthesis of AMP from IMP. The chain is Adenylosuccinate synthetase from Moorella thermoacetica (strain ATCC 39073 / JCM 9320).